The following is a 74-amino-acid chain: Large ribosomal subunit protein bL28 (74 aa).

The protein belongs to the bacterial ribosomal protein bL28 family.

This chain is Large ribosomal subunit protein bL28, found in Buchnera aphidicola subsp. Baizongia pistaciae (strain Bp).